Here is a 331-residue protein sequence, read N- to C-terminus: HTH-type transcriptional regulator RipA (331 aa).

In terms of domain architecture, HTH araC/xylS-type spans 112 to 209; it reads RAVAQVLVSN…GATPSTFTTG (98 aa). DNA-binding regions (H-T-H motif) lie at residues 129–150 and 176–199; these read EEFAEIQGVSARTLQRQFLKST and ISVVANLVGFAATSSLTRAFRRHT.

Under iron limitation, RipA negatively controls the expression of the acn (aconitase), catA (catechol 1,2 dioxygenase), leuCD (isopropylmalate dehydratase), narKGHJI (nitrite/nitrate transporter and nitrate reductase), sdhCAB (succinate dehydrogenase), pta (phosphotransacetylase) and katA (catalase) genes. Binds to the consensus sequence in the promoter region. The protein is HTH-type transcriptional regulator RipA of Corynebacterium glutamicum (strain ATCC 13032 / DSM 20300 / JCM 1318 / BCRC 11384 / CCUG 27702 / LMG 3730 / NBRC 12168 / NCIMB 10025 / NRRL B-2784 / 534).